The following is a 329-amino-acid chain: Cathepsin K (329 aa).

The first 15 residues, methionine 1–alanine 15, serve as a signal peptide directing secretion. A propeptide spans leucine 16–arginine 114 (activation peptide). Asparagine 103 is a glycosylation site (N-linked (GlcNAc...) asparagine). 3 cysteine pairs are disulfide-bonded: cysteine 136–cysteine 177, cysteine 170–cysteine 210, and cysteine 269–cysteine 318. Residue cysteine 139 is part of the active site. Catalysis depends on residues histidine 276 and asparagine 296.

Belongs to the peptidase C1 family.

It localises to the lysosome. The protein localises to the secreted. The protein resides in the apical cell membrane. It carries out the reaction Broad proteolytic activity. With small-molecule substrates and inhibitors, the major determinant of specificity is P2, which is preferably Leu, Met &gt; Phe, and not Arg.. Thiol protease involved in osteoclastic bone resorption and may participate partially in the disorder of bone remodeling. Displays potent endoprotease activity against fibrinogen at acid pH. May play an important role in extracellular matrix degradation. Involved in the release of thyroid hormone thyroxine (T4) by limited proteolysis of TG/thyroglobulin in the thyroid follicle lumen. In Macaca fascicularis (Crab-eating macaque), this protein is Cathepsin K (CTSK).